We begin with the raw amino-acid sequence, 993 residues long: uncharacterized protein (993 aa).

Positions 1-28 (MKLFPRSILITLVLSFALNLGIVTKIHA) are cleaved as a signal peptide. 7 consecutive transmembrane segments (helical) span residues 331 to 351 (IVTA…LLAG), 359 to 379 (YINF…INIT), 392 to 412 (MIQW…SWVM), 494 to 514 (MLVS…AFMV), 521 to 541 (MISI…FLFA), 554 to 574 (MISF…MFSV), and 699 to 719 (IKNI…MYNF). The interval 779-904 (GQGGGASDLE…EKVDSTSKGT (126 aa)) is disordered. Positions 805–829 (TSAPAVTTPTASSSVASSSPKTVSS) are enriched in low complexity. The span at 838-850 (PPAPTEAVSPPPA) shows a compositional bias: pro residues. Residues 866–879 (IIRDNNQESKKEID) are compositionally biased toward basic and acidic residues.

It belongs to the TrbL/VirB6 family.

It localises to the cell membrane. This is an uncharacterized protein from Rickettsia conorii (strain ATCC VR-613 / Malish 7).